The primary structure comprises 307 residues: tRNA pseudouridine synthase B (307 aa).

The active-site Nucleophile is the D38.

Belongs to the pseudouridine synthase TruB family. Type 1 subfamily.

The catalysed reaction is uridine(55) in tRNA = pseudouridine(55) in tRNA. Its function is as follows. Responsible for synthesis of pseudouridine from uracil-55 in the psi GC loop of transfer RNAs. This is tRNA pseudouridine synthase B from Bacillus cereus (strain ATCC 10987 / NRS 248).